Consider the following 54-residue polypeptide: Potassium channel toxin alpha-KTx 14.5 (54 aa).

A signal peptide spans 1 to 23; the sequence is MKIFFAILLILAVCSMAIWTVNG. 3 cysteine pairs are disulfide-bonded: cysteine 30–cysteine 46, cysteine 36–cysteine 51, and cysteine 40–cysteine 53.

It belongs to the short scorpion toxin superfamily. Potassium channel inhibitor family. Alpha-KTx 14 subfamily. As to expression, expressed by the venom gland.

The protein resides in the secreted. In terms of biological role, inhibits potassium channels. May be active towards small conductance calcium-activated potassium channels (KCNN, SK), and less active towards voltage-gated potassium channels (Kv/KCN). The sequence is that of Potassium channel toxin alpha-KTx 14.5 from Mesobuthus gibbosus (Mediterranean checkered scorpion).